The sequence spans 164 residues: MTDQPNNGAVANEENGPQFSLQRIYVRDLSFEAPKSPAIFRQEWTPTVSLDLNTRQKPLEGDFYEVVLTLSVTVNNGEEVAFIVEVQQAGIFLIKGLDDAAMSHTLGAFCPNILFPYAREAIDNLVVRGSFPALMLAPVNFDALYAQELQRMQEAGETPMPTVQ.

The protein belongs to the SecB family. As to quaternary structure, homotetramer, a dimer of dimers. One homotetramer interacts with 1 SecA dimer.

The protein localises to the cytoplasm. Functionally, one of the proteins required for the normal export of preproteins out of the cell cytoplasm. It is a molecular chaperone that binds to a subset of precursor proteins, maintaining them in a translocation-competent state. It also specifically binds to its receptor SecA. In Pseudomonas syringae pv. tomato (strain ATCC BAA-871 / DC3000), this protein is Protein-export protein SecB.